The following is a 20-amino-acid chain: Neurotoxin BmK 18(2) (20 aa).

An LCN-type CS-alpha/beta domain is found at 2–20 (RDAYIAEDYDCVYHCARDA).

This sequence belongs to the long (4 C-C) scorpion toxin superfamily. Sodium channel inhibitor family. Alpha subfamily. Expressed by the venom gland.

The protein resides in the secreted. Its function is as follows. Binds to sodium channels (Nav) and inhibits the inactivation of the activated channels, thereby blocking neuronal transmission. The sequence is that of Neurotoxin BmK 18(2) from Olivierus martensii (Manchurian scorpion).